The sequence spans 476 residues: Aspartyl/glutamyl-tRNA(Asn/Gln) amidotransferase subunit B (476 aa).

It belongs to the GatB/GatE family. GatB subfamily. As to quaternary structure, heterotrimer of A, B and C subunits.

It catalyses the reaction L-glutamyl-tRNA(Gln) + L-glutamine + ATP + H2O = L-glutaminyl-tRNA(Gln) + L-glutamate + ADP + phosphate + H(+). The catalysed reaction is L-aspartyl-tRNA(Asn) + L-glutamine + ATP + H2O = L-asparaginyl-tRNA(Asn) + L-glutamate + ADP + phosphate + 2 H(+). Its function is as follows. Allows the formation of correctly charged Asn-tRNA(Asn) or Gln-tRNA(Gln) through the transamidation of misacylated Asp-tRNA(Asn) or Glu-tRNA(Gln) in organisms which lack either or both of asparaginyl-tRNA or glutaminyl-tRNA synthetases. The reaction takes place in the presence of glutamine and ATP through an activated phospho-Asp-tRNA(Asn) or phospho-Glu-tRNA(Gln). The protein is Aspartyl/glutamyl-tRNA(Asn/Gln) amidotransferase subunit B of Geobacillus kaustophilus (strain HTA426).